A 449-amino-acid polypeptide reads, in one-letter code: Hyaluronidase-3 (449 aa).

The N-terminal stretch at 1 to 23 (MYHIWIKFLAAWIFLKKFNGVHV) is a signal peptide. 2 disulfide bridges follow: Cys-47–Cys-340 and Cys-211–Cys-227. Residues Asn-67, Asn-103, and Asn-111 are each glycosylated (N-linked (GlcNAc...) asparagine). Glu-135 functions as the Proton donor in the catalytic mechanism. Asn-153 carries an N-linked (GlcNAc...) asparagine glycan. N-linked (GlcNAc...) asparagine glycosylation occurs at Asn-357. Cystine bridges form between Cys-365–Cys-376, Cys-370–Cys-427, and Cys-429–Cys-438. Asn-401 carries an N-linked (GlcNAc...) asparagine glycan. An EGF-like domain is found at 427–438 (CQCYQGWKGLYC).

Belongs to the glycosyl hydrolase 56 family. Monomer. Expressed by the venom gland.

It is found in the secreted. The enzyme catalyses Random hydrolysis of (1-&gt;4)-linkages between N-acetyl-beta-D-glucosamine and D-glucuronate residues in hyaluronate.. In terms of biological role, snake venom endo-hyaluronidase that degrades hyaluronan to smaller oligosaccharide fragments. In venom, it is not toxic by itself, but increases the diffusion of other venom proteins by degrading the extracellular matrix. In addition, it displays antiedematogenic activity. This is Hyaluronidase-3 from Cerastes cerastes (Horned desert viper).